We begin with the raw amino-acid sequence, 388 residues long: 4-hydroxy-tetrahydrodipicolinate synthase 1, chloroplastic (388 aa).

The disordered stretch occupies residues 1 to 51 (MPYLQPPRPHPHPHPTSRLSRASPPSPFPFFPAGTSRSGRLQPVPVSGHSA). The N-terminal 62 residues, 1-62 (MPYLQPPRPH…RVSKGKFAVA (62 aa)), are a transit peptide targeting the chloroplast. Thr131 serves as a coordination point for pyruvate. Tyr217 acts as the Proton donor/acceptor in catalysis. Lys245 (schiff-base intermediate with substrate) is an active-site residue. Ile284 serves as a coordination point for pyruvate.

Belongs to the DapA family. In terms of assembly, tetramer of modified subunits derived from two genes in different combinations.

The protein localises to the plastid. It localises to the chloroplast. The catalysed reaction is L-aspartate 4-semialdehyde + pyruvate = (2S,4S)-4-hydroxy-2,3,4,5-tetrahydrodipicolinate + H2O + H(+). The protein operates within amino-acid biosynthesis; L-lysine biosynthesis via DAP pathway; (S)-tetrahydrodipicolinate from L-aspartate: step 3/4. Its activity is regulated as follows. Sensitive to lysine inhibition. This inhibition increase in an allosteric manner with increasing concentration of the inhibitor. Catalyzes the condensation of (S)-aspartate-beta-semialdehyde [(S)-ASA] and pyruvate to 4-hydroxy-tetrahydrodipicolinate (HTPA). The polypeptide is 4-hydroxy-tetrahydrodipicolinate synthase 1, chloroplastic (Triticum aestivum (Wheat)).